Here is a 316-residue protein sequence, read N- to C-terminus: HPr kinase/phosphorylase (316 aa).

Residues H143 and K164 contribute to the active site. 158 to 165 contacts ATP; the sequence is GEAGSGKS. S165 serves as a coordination point for Mg(2+). The Proton acceptor; for phosphorylation activity. Proton donor; for dephosphorylation activity role is filled by D182. Residues 206–215 are important for the catalytic mechanism of both phosphorylation and dephosphorylation; it reads LEVRGLGVLN. E207 contributes to the Mg(2+) binding site. R251 is an active-site residue. An important for the catalytic mechanism of dephosphorylation region spans residues 272–277; the sequence is PVMPGR.

Belongs to the HPrK/P family. Homohexamer. It depends on Mg(2+) as a cofactor.

It catalyses the reaction [HPr protein]-L-serine + ATP = [HPr protein]-O-phospho-L-serine + ADP + H(+). The catalysed reaction is [HPr protein]-O-phospho-L-serine + phosphate + H(+) = [HPr protein]-L-serine + diphosphate. Catalyzes the ATP- as well as the pyrophosphate-dependent phosphorylation of a specific serine residue in HPr, a phosphocarrier protein of the phosphoenolpyruvate-dependent sugar phosphotransferase system (PTS). HprK/P also catalyzes the pyrophosphate-producing, inorganic phosphate-dependent dephosphorylation (phosphorolysis) of seryl-phosphorylated HPr (P-Ser-HPr). This chain is HPr kinase/phosphorylase, found in Xanthomonas oryzae pv. oryzae (strain MAFF 311018).